Reading from the N-terminus, the 209-residue chain is N-(5'-phosphoribosyl)anthranilate isomerase (209 aa).

The protein belongs to the TrpF family.

The catalysed reaction is N-(5-phospho-beta-D-ribosyl)anthranilate = 1-(2-carboxyphenylamino)-1-deoxy-D-ribulose 5-phosphate. It participates in amino-acid biosynthesis; L-tryptophan biosynthesis; L-tryptophan from chorismate: step 3/5. The polypeptide is N-(5'-phosphoribosyl)anthranilate isomerase (Erythrobacter litoralis (strain HTCC2594)).